Here is a 179-residue protein sequence, read N- to C-terminus: Large ribosomal subunit protein uL5 (179 aa).

Belongs to the universal ribosomal protein uL5 family. In terms of assembly, part of the 50S ribosomal subunit; part of the 5S rRNA/L5/L18/L25 subcomplex. Contacts the 5S rRNA and the P site tRNA. Forms a bridge to the 30S subunit in the 70S ribosome.

Functionally, this is one of the proteins that bind and probably mediate the attachment of the 5S RNA into the large ribosomal subunit, where it forms part of the central protuberance. In the 70S ribosome it contacts protein S13 of the 30S subunit (bridge B1b), connecting the 2 subunits; this bridge is implicated in subunit movement. Contacts the P site tRNA; the 5S rRNA and some of its associated proteins might help stabilize positioning of ribosome-bound tRNAs. In Synechococcus sp. (strain RCC307), this protein is Large ribosomal subunit protein uL5.